Reading from the N-terminus, the 298-residue chain is N-acetylmuramic acid 6-phosphate etherase (298 aa).

The region spanning 55–218 (IHAQVSGGGR…STGLMIKSGK (164 aa)) is the SIS domain. Glu83 (proton donor) is an active-site residue. Glu114 is a catalytic residue.

This sequence belongs to the GCKR-like family. MurNAc-6-P etherase subfamily. In terms of assembly, homodimer.

It catalyses the reaction N-acetyl-D-muramate 6-phosphate + H2O = N-acetyl-D-glucosamine 6-phosphate + (R)-lactate. The protein operates within amino-sugar metabolism; 1,6-anhydro-N-acetylmuramate degradation. Its pathway is amino-sugar metabolism; N-acetylmuramate degradation. It functions in the pathway cell wall biogenesis; peptidoglycan recycling. Functionally, specifically catalyzes the cleavage of the D-lactyl ether substituent of MurNAc 6-phosphate, producing GlcNAc 6-phosphate and D-lactate. Together with AnmK, is also required for the utilization of anhydro-N-acetylmuramic acid (anhMurNAc) either imported from the medium or derived from its own cell wall murein, and thus plays a role in cell wall recycling. The sequence is that of N-acetylmuramic acid 6-phosphate etherase from Escherichia coli O157:H7 (strain EC4115 / EHEC).